Consider the following 773-residue polypeptide: MRTLEDSSGTVLHRLIQEQLRYGNLTETRTLLAIQQQALRGGAGAGGTGSPQASLEIGAPEDSQVLQQATRQEPQGQEHQGGETHLAENRLYRLCPQPSKGEELPTYEEAKAHSQYYAAQQAGSRLHGGDRDPRGASGGSRRQDEALRELRHGHVRSLSERLLQLSLERNGARVPSHMSSSHSFPQLARSQQGPQPRGPPAEGPEPRGPPPQYPHAVMAQETAAVNDPRYRPRSSPHFQHAEVRILQAQVPPVFLQQQQYQYLQQPQEHSPPLHPAALGHGPPSSFSPPALEGPPGAQATSGSAHLAQMESVLRENARLQRDNERLQRELESTSEKASCIEKLENEIQRLSEAHESLMRTSSKREALEKTMRNKMDSEMRRLQDFNRDLRERLESANRHLASKTQEAQAGSQDMVAKLLAQSYEQQQEQEKLEREMALLRGAIEDQRRRAELLEQALGNAQSRAARAEEELRKKQAYVEKVERLQQALGQLQAACEKREQLELRLRTRLEQELKALRAQQRQTGTLTGGGGSHTGSTELSALRLSEQLREKEEQILALEADMTKWEQKYLEERAMRQFAMDAAATAAAQRDTTLIRHSPQPSPSSSFNEGLLAGNHRHQEMESRLKVLHAQILEKDAVIKVLQQRSRKDPGKATQGTLRPAKSVPSIFAAAVGTQGWQGFSTSERQTDAPARQTVDRGPAEEPPATPPLPAHTKHGSRDGSTQTDGPADSTSACLASEPDSLLGCNGSQRTTSLDSIAATRVQDLSDMVEILI.

3 disordered regions span residues 41–157, 169–238, and 259–309; these read GGAG…HVRS, RNGA…SPHF, and QYQY…LAQM. Basic and acidic residues-rich tracts occupy residues 80–91, 100–112, and 141–152; these read QGGETHLAENRL, KGEE…EAKA, and RRQDEALRELRH. Residues 101 to 302 are required for interaction with CDH5; it reads GEELPTYEEA…GPPGAQATSG (202 aa). Position 107 is a phosphotyrosine; by FGFR1 (Y107). Polar residues predominate over residues 177–190; sequence HMSSSHSFPQLARS. Residues 196-213 are compositionally biased toward pro residues; sequence PRGPPAEGPEPRGPPPQY. The tract at residues 220–302 is required for interaction with CDH1; the sequence is QETAAVNDPR…GPPGAQATSG (83 aa). Residues 304 to 577 are a coiled coil; sequence AHLAQMESVL…KYLEERAMRQ (274 aa). Glycyl lysine isopeptide (Lys-Gly) (interchain with G-Cter in ubiquitin) cross-links involve residues K342 and K403. Disordered regions lie at residues 589 to 611 and 677 to 754; these read QRDT…NEGL and WQGF…TTSL. Residues 701–710 are compositionally biased toward pro residues; sequence EEPPATPPLP. Residues 719-734 are compositionally biased toward polar residues; it reads DGSTQTDGPADSTSAC. A phosphoserine mark is found at S753 and S756. Residues 770 to 773 carry the PDZ-binding motif; the sequence is EILI.

Belongs to the angiomotin family. Part of a complex composed of AMOTL2, MAGI1 and CDH5, within the complex AMOTL2 acts as a scaffold protein for the interaction of MAGI1 with CDH5. The complex is required for coupling actin fibers to cell junctions in endothelial cells. Within the complex AMOTL2 (via its N-terminus) interacts with CDH5. Interacts (via N-terminus) with MAGI1. Interacts (via N-terminus) with ACTB; the interaction facilitates binding of cell junction complexes to actin fibers in endothelial cells. Interacts with CDH1; the interaction may facilitate binding of radial actin fibers to cell junction complexes. Interacts with SRC. Interacts with YAP1; the interaction is required for ubiquitination of AMOTL2 and localization of YAP1 to tight junctions. Interacts with WWP1; the interaction facilitates WWP1 interaction with the Crumbs complex and subsequent WWP1 translocation to the plasma membrane. WWP1 interaction with the Crumbs complex promotes WWP1 monoubiquitination of AMOTL2 which subsequently activates the Hippo signaling pathway. When ubiquitinated interacts with LATS2 (via UBA domain); the interaction promotes LATS2 phosphorylation of YAP1. Interacts (via PPXY motif) with WWTR1/TAZ (via WW domain); the interaction promotes WWTR1/TAZ localization to the cytoplasm and thereby inhibition of its transcriptional properties. Interacts with PHLDB2; interaction may facilitate PHLDB2 localization to the myotube podosome cortex that surrounds the core. Post-translationally, monoubiquitinated at Lys-342 and Lys-403 by Crumbs complex-bound WWP1. De-ubiquitinated at Lys-342 and Lys-403 by USP9X; the interaction may be promoted by cell contact inhibition. Deubiquitination of AMOTL2 negatively regulates Hippo signaling activation. Phosphorylation at Tyr-107 is necessary for efficient binding to SRC and synergistically functioning with SRC to activate the downstream MAPK pathway.

The protein resides in the recycling endosome. The protein localises to the cytoplasm. It is found in the cell projection. Its subcellular location is the podosome. It localises to the cell junction. Regulates the translocation of phosphorylated SRC to peripheral cell-matrix adhesion sites. Required for proper architecture of actin filaments. Plays a role in coupling actin fibers to cell junctions in endothelial cells and is therefore required for correct endothelial cell morphology via facilitating transcellular transmission of mechanical force resulting in endothelial cell elongation. Required for the anchoring of radial actin fibers to CDH1 junction complexes at the cell membrane which facilitates organization of radial actin fiber structure and cellular response to contractile forces. This contributes to maintenance of cell area, size, shape, epithelial sheet organization and trophectoderm cell properties that facilitate blastocyst zona hatching. Inhibits the Wnt/beta-catenin signaling pathway, probably by recruiting CTNNB1 to recycling endosomes and hence preventing its translocation to the nucleus. Participates in angiogenesis. Activates the Hippo signaling pathway in response to cell contact inhibition via interaction with and ubiquitination by Crumbs complex-bound WWP1. Ubiquitinated AMOTL2 then interacts with LATS2 which in turn phosphorylates YAP1, excluding it from the nucleus and localizing it to the cytoplasm and tight junctions, therefore ultimately repressing YAP1-driven transcription of target genes. Acts to inhibit WWTR1/TAZ transcriptional coactivator activity via sequestering WWTR1/TAZ in the cytoplasm and at tight junctions. Regulates the size and protein composition of the podosome cortex and core at myofibril neuromuscular junctions. Selectively promotes FGF-induced MAPK activation through SRC. May play a role in the polarity, proliferation and migration of endothelial cells. This Rattus norvegicus (Rat) protein is Angiomotin-like protein 2.